Here is a 367-residue protein sequence, read N- to C-terminus: 3-dehydroquinate synthase (367 aa).

Residues 69-74 (DGEAFK), 103-107 (GVIGD), 127-128 (TT), lysine 140, and lysine 149 contribute to the NAD(+) site. Positions 182, 245, and 262 each coordinate Zn(2+).

The protein belongs to the sugar phosphate cyclases superfamily. Dehydroquinate synthase family. Requires Co(2+) as cofactor. Zn(2+) is required as a cofactor. NAD(+) serves as cofactor.

It localises to the cytoplasm. It catalyses the reaction 7-phospho-2-dehydro-3-deoxy-D-arabino-heptonate = 3-dehydroquinate + phosphate. It functions in the pathway metabolic intermediate biosynthesis; chorismate biosynthesis; chorismate from D-erythrose 4-phosphate and phosphoenolpyruvate: step 2/7. In terms of biological role, catalyzes the conversion of 3-deoxy-D-arabino-heptulosonate 7-phosphate (DAHP) to dehydroquinate (DHQ). The sequence is that of 3-dehydroquinate synthase from Pseudomonas savastanoi pv. phaseolicola (strain 1448A / Race 6) (Pseudomonas syringae pv. phaseolicola (strain 1448A / Race 6)).